A 1692-amino-acid chain; its full sequence is Cullin-7 (1692 aa).

A CPH domain is found at 348-421 (RTAFASVNTY…HWHMLEILGF (74 aa)). The region spanning 791-970 (PIQIPFFDVF…HTRLFYMVRA (180 aa)) is the DOC domain. The span at 1319-1335 (VAHEDSGKEHKSKKEDA) shows a compositional bias: basic and acidic residues. Residues 1319 to 1374 (VAHEDSGKEHKSKKEDAAGETAAVAMADEEEEEGKKEEGEEEEGEGEEELEEEEER) are disordered. The span at 1357–1374 (GEEEEGEGEEELEEEEER) shows a compositional bias: acidic residues. Residue K1570 forms a Glycyl lysine isopeptide (Lys-Gly) (interchain with G-Cter in NEDD8) linkage.

It belongs to the cullin family. In terms of assembly, component of the 3M complex, composed of core components CUL7, CCDC8 and OBSL1. Component of the Cul7-RING(FBXW8) complex consisting of CUL7, RBX1, SKP1 and FBXW8. Within the Cul7-RING(FBXW8) complex interacts with FBXW8 and RBX1, but not with SKP1. Interacts with CUL1 (via the C-terminal domain); the interaction seems to be mediated by FBXW8; it is likely specific to FBXW8, but not other F-box proteins. Interacts (via the CPH domain) with p53/TP53; the interaction preferentially involves tetrameric and dimeric p53/TP53; this interaction recruits p53/TP53 for ubiquitination by neddylated CUL1-RBX1. The CUL7-CUL9 heterodimer seems to interact specifically with p53/TP53. Interacts with FBXW8; interaction is mutually exclusive of binding to CUL9 or p53/TP53. Interacts with CUL9; leading to inhibited CUL9 activity. Interacts with OBSL1. Interacts (as part of the 3M complex) with HDAC4 and HDAC5; it is negatively regulated by ANKRA2.

Its subcellular location is the cytoplasm. It is found in the cytoskeleton. The protein resides in the microtubule organizing center. The protein localises to the centrosome. It localises to the perinuclear region. Its subcellular location is the golgi apparatus. Its pathway is protein modification; protein ubiquitination. In terms of biological role, core component of the 3M and Cul7-RING(FBXW8) complexes, which mediate the ubiquitination and subsequent proteasomal degradation of target proteins. Core component of the 3M complex, a complex required to regulate microtubule dynamics and genome integrity. It is unclear how the 3M complex regulates microtubules, it could act by controlling the level of a microtubule stabilizer. The Cul7-RING(FBXW8) complex alone lacks ubiquitination activity and does not promote polyubiquitination and proteasomal degradation of p53/TP53. However it mediates recruitment of p53/TP53 for ubiquitination by neddylated CUL1-RBX1. Interaction with CUL9 is required to inhibit CUL9 activity and ubiquitination of BIRC5. The Cul7-RING(FBXW8) complex also mediates ubiquitination and consequent degradation of target proteins such as GORASP1, IRS1 and MAP4K1/HPK1. Ubiquitination of GORASP1 regulates Golgi morphogenesis and dendrite patterning in brain. Mediates ubiquitination and degradation of IRS1 in a mTOR-dependent manner: the Cul7-RING(FBXW8) complex recognizes and binds IRS1 previously phosphorylated by S6 kinase (RPS6KB1 or RPS6KB2). The Cul7-RING(FBXW8) complex also mediates ubiquitination of MAP4K1/HPK1: recognizes and binds autophosphorylated MAP4K1/HPK1, leading to its degradation, thereby affecting cell proliferation and differentiation. Acts as a regulator in trophoblast cell epithelial-mesenchymal transition and placental development. While the Cul7-RING(FBXW8) and the 3M complexes are associated and involved in common processes, CUL7 and the Cul7-RING(FBXW8) complex may have additional functions. Probably plays a role in the degradation of proteins involved in endothelial proliferation and/or differentiation. The chain is Cullin-7 (Cul7) from Rattus norvegicus (Rat).